A 221-amino-acid chain; its full sequence is Serine/arginine-rich splicing factor 2 (221 aa).

Serine 2 is subject to N-acetylserine. Position 2 is a phosphoserine (serine 2). One can recognise an RRM domain in the interval threonine 14–tyrosine 92. Threonine 22 and threonine 25 each carry phosphothreonine. Serine 26 carries the post-translational modification Phosphoserine. Position 52 is an N6-acetyllysine (lysine 52). Residues tyrosine 92 to serine 221 form a disordered region. Composition is skewed to basic residues over residues arginine 117–serine 171 and serine 179–serine 189. Residues serine 189, serine 191, serine 204, serine 206, serine 208, serine 212, and serine 220 each carry the phosphoserine modification. Acidic residues predominate over residues serine 212 to serine 221.

Belongs to the splicing factor SR family. In terms of assembly, in vitro, self-associates and binds SRSF1/SFRS1 (ASF/SF2), SNRP70 and U2AF1 but not U2AF2. Binds SREK1/SFRS12. Interacts with CCNL1 and CCNL2. Interacts with SCAF11. Interacts with ZRSR2/U2AF1-RS2. Interacts with CCDC55 (via C-terminus). Interacts with BRDT. Post-translationally, extensively phosphorylated on serine residues in the RS domain. Phosphorylated by SRPK2 and this causes its redistribution from the nuclear speckle to nucleoplasm and controls cell fate decision in response to cisplatin treatment. KAT5/TIP60 inhibits its phosphorylation by preventing SRPK2 nuclear translocation. In terms of processing, acetylation on Lys-52 by KAT5/TIP60 promotes its proteasomal degradation. This effect is counterbalanced by HDAC6, which positively controls SRSF2 protein level by deacetylating it and preventing its proteasomal degradation.

It is found in the nucleus. Its subcellular location is the nucleoplasm. The protein localises to the nucleus speckle. Functionally, necessary for the splicing of pre-mRNA. It is required for formation of the earliest ATP-dependent splicing complex and interacts with spliceosomal components bound to both the 5'- and 3'-splice sites during spliceosome assembly. It also is required for ATP-dependent interactions of both U1 and U2 snRNPs with pre-mRNA. Interacts with other spliceosomal components, via the RS domains, to form a bridge between the 5'- and 3'-splice site binding components, U1 snRNP and U2AF. Binds to purine-rich RNA sequences, either 5'-AGSAGAGTA-3' (S=C or G) or 5'-GTTCGAGTA-3'. Can bind to beta-globin mRNA and commit it to the splicing pathway. The phosphorylated form (by SRPK2) is required for cellular apoptosis in response to cisplatin treatment. The polypeptide is Serine/arginine-rich splicing factor 2 (SRSF2) (Pan troglodytes (Chimpanzee)).